The sequence spans 486 residues: Portal protein (486 aa).

A disordered region spans residues 456–486 (MVDADPTVPGSPSPTAPPKPQPAIESSGGDA). Pro residues predominate over residues 464–476 (PGSPSPTAPPKPQ).

The protein belongs to the SPP1-like portal protein family. As to quaternary structure, homododecamer.

Its subcellular location is the virion. In terms of biological role, forms the portal vertex of the capsid. This portal plays critical roles in head assembly, genome packaging, neck/tail attachment, and genome ejection. The portal protein multimerizes as a single ring-shaped homododecamer arranged around a central channel. Binds to the terminase subunits to form the packaging machine. The chain is Portal protein (14) from Mycobacterium phage L5 (Mycobacteriophage L5).